The following is a 1067-amino-acid chain: Lon protease homolog, mitochondrial (1067 aa).

The N-terminal 36 residues, 1–36 (MITRLSGACLRRSGAKRNWPREHLVHRSLLASFSTT), are a transit peptide targeting the mitochondrion. Residues 55–82 (KSKEPKDNKPLDNKNDPKKTHNEDESHT) show a composition bias toward basic and acidic residues. Disordered regions lie at residues 55–142 (KSKE…MPLN) and 262–314 (IPPK…ESTP). The span at 128–139 (FELGGEENEDEM) shows a compositional bias: acidic residues. A Lon N-terminal domain is found at 162–425 (LLALPIARRP…KALYVLKKEL (264 aa)). Residues 293–311 (VKSDLKQDNGKEEPEKEVE) are compositionally biased toward basic and acidic residues. 578-585 (GPPGVGKT) contributes to the ATP binding site. Positions 791-820 (NSKEKSTGKSGKKTSPQSSEDAANKEASSV) are disordered. The Lon proteolytic domain maps to 854–1040 (TTPPGVVMGL…DDVFKRVFSN (187 aa)). Residues S946 and K989 contribute to the active site.

Belongs to the peptidase S16 family. In terms of assembly, homohexamer or homoheptamer. Organized in a ring with a central cavity.

The protein localises to the mitochondrion matrix. It catalyses the reaction Hydrolysis of proteins in presence of ATP.. Functionally, ATP-dependent serine protease that mediates the selective degradation of misfolded, unassembled or oxidatively damaged polypeptides as well as certain short-lived regulatory proteins in the mitochondrial matrix. May also have a chaperone function in the assembly of inner membrane protein complexes. Participates in the regulation of mitochondrial gene expression and in the maintenance of the integrity of the mitochondrial genome. Binds to mitochondrial DNA in a site-specific manner. The sequence is that of Lon protease homolog, mitochondrial (pim1) from Schizosaccharomyces pombe (strain 972 / ATCC 24843) (Fission yeast).